A 332-amino-acid chain; its full sequence is Biotin synthase (332 aa).

A Radical SAM core domain is found at 51–279; sequence YKVQLASLLS…RSRVRLSAGR (229 aa). [4Fe-4S] cluster contacts are provided by Cys66, Cys70, and Cys73. [2Fe-2S] cluster contacts are provided by Cys110, Cys142, Cys202, and Arg274.

The protein belongs to the radical SAM superfamily. Biotin synthase family. In terms of assembly, homodimer. It depends on [4Fe-4S] cluster as a cofactor. [2Fe-2S] cluster is required as a cofactor.

It catalyses the reaction (4R,5S)-dethiobiotin + (sulfur carrier)-SH + 2 reduced [2Fe-2S]-[ferredoxin] + 2 S-adenosyl-L-methionine = (sulfur carrier)-H + biotin + 2 5'-deoxyadenosine + 2 L-methionine + 2 oxidized [2Fe-2S]-[ferredoxin]. Its pathway is cofactor biosynthesis; biotin biosynthesis; biotin from 7,8-diaminononanoate: step 2/2. Functionally, catalyzes the conversion of dethiobiotin (DTB) to biotin by the insertion of a sulfur atom into dethiobiotin via a radical-based mechanism. This Prochlorococcus marinus (strain SARG / CCMP1375 / SS120) protein is Biotin synthase.